Consider the following 244-residue polypeptide: Venom nerve growth factor 3 (244 aa).

The signal sequence occupies residues 1–18 (MSMLCYTLIIAFLIGIWA). The propeptide occupies 19 to 125 (APKSEDNVPL…TLNRNIRAKR (107 aa)). The segment covering 47-66 (GLKTSRNTDQRHPAPKKAED) has biased composition (basic and acidic residues). Positions 47-67 (GLKTSRNTDQRHPAPKKAEDQ) are disordered. 3 cysteine pairs are disulfide-bonded: C139/C205, C181/C233, and C193/C235.

This sequence belongs to the NGF-beta family. Homodimer; non-covalently linked. As to expression, expressed by the venom gland.

Its subcellular location is the secreted. Functionally, nerve growth factor is important for the development and maintenance of the sympathetic and sensory nervous systems. It stimulates division and differentiation of sympathetic and embryonic sensory neurons as well as basal forebrain cholinergic neurons in the brain. Its relevance in the snake venom is not clear. However, it has been shown to inhibit metalloproteinase-dependent proteolysis of platelet glycoprotein Ib alpha, suggesting a metalloproteinase inhibition to prevent metalloprotease autodigestion and/or protection against prey proteases. Binds a lipid between the two protein chains in the homodimer. The lipid-bound form promotes histamine relase from mouse mast cells, contrary to the lipid-free form. The polypeptide is Venom nerve growth factor 3 (Notechis scutatus scutatus (Mainland tiger snake)).